Consider the following 708-residue polypeptide: MALALGEGGGGSRLRRQLESGGFAAAEYVKQLSQQSDGDRDLQEHRQRIQALQEETAQSLKRNVYQNYRQFIETAREISYLESEMYQLSHILTEQKGIMEAVTQALLLQADRDDPALGARRAAAADPFLPLSAKEAAASEEGRQRTLTTLLEKVEGCRDLLPESPGKYLVYNGDLLEYDADHMAQIQRVHAFLMNDCLLVATALPNRRGAYRYDALYPLEGLAVVNVKDNPPMKDMFKLLMFPESRIFQAENAKIKKEWLEVLEETKRNRALSEKRRLEQEALPRPAPTPPESTNPFEEEEEEEEEPSAEEEAVDLSLEWIQELPEDLDVCIAQRDFEGAVDLLDKLNEYLADKPVSQPVKELRAKVDERVRQLTDVLVFELSPDRSLRGGPRATRRAVSQLIRLGQSTKACELFLKNRAAAVHTAIRQLRIEGATLLYIHKLCHVFFTSLLETAREFETDFAGNNGCYSAFVVWARSSMRMFVDAFSKQVFDSKESLSTAAECVKVAKEHCKQLSDIGLDLTFIIHALLVKDIKGALQSYKDIIIEATKHRNSEEMWRRMNLMTPEALGKLREEMKSCGVGSFDQYTGDDCWVNLSYTVVAFTKQTMAFLEEALKLYFPELHMVLLESLVEIILVAVQHVDYSLRCEQDPEKKAFIRQNASFLYETVLPVVEKRFEEGVGKPAKQLQDLRNASRLMRINPESTTSVV.

One can recognise a PH domain in the interval Tyr-168–Arg-268. A compositionally biased stretch (basic and acidic residues) spans Ala-271–Ala-282. The disordered stretch occupies residues Ala-271–Val-314. Residues Phe-297–Val-314 are compositionally biased toward acidic residues.

The protein belongs to the EXO84 family. As to quaternary structure, the exocyst complex is composed of EXOC1, EXOC2, EXOC3, EXOC4, EXOC5, EXOC6, EXOC7 and EXOC8.

Its subcellular location is the cytoplasm. The protein resides in the perinuclear region. The protein localises to the cell projection. It is found in the growth cone. Component of the exocyst complex involved in the docking of exocytic vesicles with fusion sites on the plasma membrane. This is Exocyst complex component 8 (EXOC8) from Gallus gallus (Chicken).